The chain runs to 201 residues: 3-isopropylmalate dehydratase small subunit (201 aa).

The protein belongs to the LeuD family. LeuD type 1 subfamily. Heterodimer of LeuC and LeuD.

The enzyme catalyses (2R,3S)-3-isopropylmalate = (2S)-2-isopropylmalate. Its pathway is amino-acid biosynthesis; L-leucine biosynthesis; L-leucine from 3-methyl-2-oxobutanoate: step 2/4. Functionally, catalyzes the isomerization between 2-isopropylmalate and 3-isopropylmalate, via the formation of 2-isopropylmaleate. The protein is 3-isopropylmalate dehydratase small subunit of Allorhizobium ampelinum (strain ATCC BAA-846 / DSM 112012 / S4) (Agrobacterium vitis (strain S4)).